Here is a 203-residue protein sequence, read N- to C-terminus: Nucleoside triphosphate pyrophosphatase (203 aa).

Residue Asp-80 is the Proton acceptor of the active site.

Belongs to the Maf family. It depends on a divalent metal cation as a cofactor.

The protein localises to the cytoplasm. It catalyses the reaction a ribonucleoside 5'-triphosphate + H2O = a ribonucleoside 5'-phosphate + diphosphate + H(+). It carries out the reaction a 2'-deoxyribonucleoside 5'-triphosphate + H2O = a 2'-deoxyribonucleoside 5'-phosphate + diphosphate + H(+). Functionally, nucleoside triphosphate pyrophosphatase. May have a dual role in cell division arrest and in preventing the incorporation of modified nucleotides into cellular nucleic acids. The protein is Nucleoside triphosphate pyrophosphatase of Gluconobacter oxydans (strain 621H) (Gluconobacter suboxydans).